The chain runs to 2073 residues: Histone acetyltransferase KAT6B (2073 aa).

The SAMD1-like winged helix (WH) domain maps to 1–77; sequence MVKLANPLYT…LASYKDPDNP (77 aa). Residues 72–97 are disordered; it reads KDPDNPGRFSSVKPGTFPKSAKGSRG. An H15 domain is found at 103 to 176; the sequence is RNVDWNKLLR…KDGPQYRVNY (74 aa). PHD-type zinc fingers lie at residues 213–272 and 269–320; these read IPIC…CKTC and CKTC…CRPK. Ser-355 carries the phosphoserine modification. 4 disordered regions span residues 360–409, 442–531, 553–583, and 639–663; these read EGSM…RPGA, FTPS…VPSL, TQGQ…TAKS, and VTPQ…PDQD. The negatively regulates HAT activity stretch occupies residues 361–717; sequence GSMNAFTGRG…ECESGVEDCG (357 aa). Residues 379–399 show a composition bias toward polar residues; it reads KVCTTPSSGHAASGKDSSSRL. The span at 447–460 shows a compositional bias: basic and acidic residues; it reads DGRRSRGEIIDFSK. Residues 470 to 485 are compositionally biased toward polar residues; sequence QKQSCTSHVLATGTTQ. Residues 488–499 are compositionally biased toward pro residues; that stretch reads KPPPSSLPPPTP. A compositionally biased stretch (low complexity) spans 501–531; it reads SGQSPSSQKSSTATSSPSPQSSSSQCSVPSL. Phosphoserine is present on Ser-647. Lys-673 is covalently cross-linked (Glycyl lysine isopeptide (Lys-Gly) (interchain with G-Cter in SUMO2)). Residues 715 to 989 form the MYST-type HAT domain; sequence DCGRYPSVIE…LDPDSLRWTP (275 aa). Residues 718–1008 form a catalytic region; it reads RYPSVIEFGK…EEEREAEKEA (291 aa). The segment at 748-773 adopts a C2HC MYST-type zinc-finger fold; sequence LYLCEFCLKYMKSKNILLRHSKKCGW. The interaction with BRPF1 stretch occupies residues 752–1008; the sequence is EFCLKYMKSK…EEEREAEKEA (257 aa). An N6-acetyllysine; by autocatalysis modification is found at Lys-815. Acetyl-CoA contacts are provided by residues 856–860 and 865–871; these read SCIMI and QRQGFGR. Glu-891 (proton donor/acceptor) is an active-site residue. Position 895 (Ser-895) interacts with acetyl-CoA. Disordered stretches follow at residues 1022–1452, 1484–1538, and 1580–1619; these read EQEI…FKEV, SCNS…MEID, and QSPQ…SPSV. The segment covering 1025 to 1043 has biased composition (polar residues); sequence ILSTRANSRQSPAKVQSKN. An N6-acetyllysine mark is found at Lys-1038, Lys-1042, and Lys-1044. The residue at position 1048 (Ser-1048) is a Phosphoserine. Residues 1069–1105 show a composition bias toward acidic residues; the sequence is SEEEEEEEDEEEEEEEEEEEEDEEEEEEEEEEEEEEN. The segment covering 1106 to 1117 has biased composition (polar residues); the sequence is IQSSPPRLTKPQ. A compositionally biased stretch (basic residues) spans 1121 to 1140; that stretch reads IKRKRPFVLKKKRGRKRRRI. A compositionally biased stretch (low complexity) spans 1142–1155; the sequence is SSVTTETISETTEV. Positions 1187–1200 are enriched in basic residues; the sequence is PVLRKAFQHQPGKK. 3 stretches are compositionally biased toward basic and acidic residues: residues 1229 to 1243, 1306 to 1315, and 1341 to 1350; these read SNLK…EPLK, RIEEEVKETG, and EKPEDDLIKP. Over residues 1351–1374 the composition is skewed to acidic residues; the sequence is EEEEEEEEEEEEEEEEEEGEEEEG. Basic and acidic residues-rich tracts occupy residues 1378–1390 and 1396–1407; these read VEKD…SQEK and STEKEDSARLDD. The span at 1408-1417 shows a compositional bias: acidic residues; that stretch reads HEEEEEEDEE. Basic and acidic residues predominate over residues 1433-1452; it reads HMESAEVEKEELPRESFKEV. The segment covering 1498–1507 has biased composition (acidic residues); that stretch reads AVPESDEEPP. Over residues 1513–1529 the composition is skewed to basic and acidic residues; that stretch reads QKQDQKNSKEVDTEFKE. An interaction with RUNX1 and RUNX2 region spans residues 1560–2073; the sequence is QDCAETQEAC…QSLNGSYMRR (514 aa). Positions 1580–1591 are enriched in polar residues; the sequence is QSPQIATTLDDC. Residues 1594 to 1611 show a composition bias toward low complexity; sequence SDHSSPVSSVHSHPGQSV.

This sequence belongs to the MYST (SAS/MOZ) family. As to quaternary structure, component of the MOZ/MORF complex composed at least of ING5, KAT6A, KAT6B, MEAF6 and one of BRPF1, BRD1/BRPF2 and BRPF3. Interacts with RUNX1 and RUNX2. Post-translationally, autoacetylated. Autoacetylation at Lys-815 is required for proper function. In terms of tissue distribution, ubiquitously expressed, with high levels in heart, pancreas, testis and ovary.

Its subcellular location is the nucleus. It catalyses the reaction L-lysyl-[protein] + acetyl-CoA = N(6)-acetyl-L-lysyl-[protein] + CoA + H(+). Its function is as follows. Histone acetyltransferase which may be involved in both positive and negative regulation of transcription. Required for RUNX2-dependent transcriptional activation. May be involved in cerebral cortex development. Component of the MOZ/MORF complex which has a histone H3 acetyltransferase activity. This chain is Histone acetyltransferase KAT6B (KAT6B), found in Homo sapiens (Human).